Consider the following 195-residue polypeptide: Small ribosomal subunit protein uS7 (195 aa).

The protein belongs to the universal ribosomal protein uS7 family. As to quaternary structure, part of the 30S ribosomal subunit.

Functionally, one of the primary rRNA binding proteins, it binds directly to 16S rRNA where it nucleates assembly of the head domain of the 30S subunit. Is located at the subunit interface close to the decoding center. The chain is Small ribosomal subunit protein uS7 from Sulfolobus acidocaldarius (strain ATCC 33909 / DSM 639 / JCM 8929 / NBRC 15157 / NCIMB 11770).